The following is a 447-amino-acid chain: GTPase Der (447 aa).

2 consecutive EngA-type G domains span residues 3–167 and 181–354; these read PVVA…NLPD and IKLA…KSAT. GTP-binding positions include 9-16, 56-60, 119-122, 187-194, 234-238, and 299-302; these read GRPNVGKS, DTGGF, NKAE, DTAGL, and NKWD. The KH-like domain maps to 355–439; that stretch reads RKMSTPVLTR…PLRIQFKSSQ (85 aa).

Belongs to the TRAFAC class TrmE-Era-EngA-EngB-Septin-like GTPase superfamily. EngA (Der) GTPase family. As to quaternary structure, associates with the 50S ribosomal subunit.

GTPase that plays an essential role in the late steps of ribosome biogenesis. The chain is GTPase Der from Variovorax paradoxus (strain S110).